Reading from the N-terminus, the 206-residue chain is Inner membrane protein YnjF (206 aa).

Topologically, residues 1 to 37 (MLDRHLHPRIKPLLHQCVRVLDKPGITPDGLTLVGFA) are periplasmic. The chain crosses the membrane as a helical span at residues 38–60 (IGVLALPFLALGWYLAALVVILL). The Cytoplasmic segment spans residues 61–79 (NRLLDGLDGALARRRELTD). Residues 80–102 (AGGFLDISLDFLFYALVPFGFIL) traverse the membrane as a helical segment. Over 103 to 111 (AAPEQNALA) the chain is Periplasmic. The helical transmembrane segment at 112 to 134 (GGWLLFAFIGTGSSFLAFAALAA) threads the bilayer. At 135–146 (KHQIDNPGYAHK) the chain is on the cytoplasmic side. The chain crosses the membrane as a helical span at residues 147-169 (SFYYLGGLTEGTETILLFVLGCL). Over 170-173 (FPAW) the chain is Periplasmic. A helical transmembrane segment spans residues 174–196 (FAWFAWIFGALCWMTTFTRVWSG). Residues 197 to 206 (YLTLKSLQRQ) lie on the Cytoplasmic side of the membrane.

The protein belongs to the CDP-alcohol phosphatidyltransferase class-I family.

It localises to the cell inner membrane. The chain is Inner membrane protein YnjF (ynjF) from Escherichia coli (strain K12).